The sequence spans 499 residues: Signal recognition particle subunit SRP54 2 (499 aa).

A G-domain region spans residues M1–L295. GTP is bound by residues G108 to T115, D190 to R194, and T248 to D251. The tract at residues G296 to K499 is M-domain.

It belongs to the GTP-binding SRP family. SRP54 subfamily. Component of a signal recognition particle (SRP) complex that consists of a 7SL RNA molecule of 300 nucleotides and six protein subunits: SRP72, SRP68, SRP54, SRP19, SRP14 and SRP9.

It localises to the cytoplasm. Its subcellular location is the endoplasmic reticulum. The enzyme catalyses GTP + H2O = GDP + phosphate + H(+). Functionally, component of the signal recognition particle (SRP) complex, a ribonucleoprotein complex that mediates the cotranslational targeting of secretory and membrane proteins to the endoplasmic reticulum (ER). As part of the SRP complex, associates with the SRP receptor (SR) component SRPRA to target secretory proteins to the endoplasmic reticulum membrane. Binds to the signal sequence of presecretory proteins when they emerge from the ribosomes. Displays basal GTPase activity, and stimulates reciprocal GTPase activation of the SR subunit SRPRA. Forms a guanosine 5'-triphosphate (GTP)-dependent complex with the SR subunit SRPRA. SR compaction and GTPase mediated rearrangement of SR drive SRP-mediated cotranslational protein translocation into the ER. Requires the presence of SRP9/SRP14 and/or SRP19 to stably interact with RNA. The chain is Signal recognition particle subunit SRP54 2 from Solanum lycopersicum (Tomato).